The chain runs to 495 residues: MDYYYDDYYDEYYDHPDQAAARLFHRDLSIEETIKNCVHPSLRFATQYITNFIAINLLFSVLVLIVRKLFPTAQRSLHLLSCVCGAALVYRVIDHGFYHFLQLAVSLYAVQWTLHRWLTGTGRYIKTPFIVIAYGIGNLLVSELLEPSPETWNRIRGTQMILLMKALSLAFDTDDNHSLRSQLTVLSYSGYILCPANIVLGPWISFNDYLTIWKPPAGIEPKQCRSSSGRRMLIHVFRIVTSALMAVGFLLTSNCMIDYLLAPINSWKWVRAYGRALSFRTSHYFIGYLSQCSMMAAAADWHRAEDERSIMLPVSSLYRITSPMAVEFPRSLVQVVTAWNIPMHLWLKRYIFRTTKRPFGTGTAIALTYIISSLLHGLHYRLWITLLTIGSWTFVEHEVRKKLATIYSACVLVGKCPSSCTVHQHKSNSVFCTVINMLFFALNIFNLIYLGCIFESSEGPPDEVQQDKSMFGPWTELNYASHWLLVFAYLFYFVI.

8 consecutive transmembrane segments (helical) span residues 46–66, 92–112, 184–204, 232–252, 358–378, 403–422, 434–454, and 475–495; these read TQYITNFIAINLLFSVLVLIV, VIDHGFYHFLQLAVSLYAVQW, TVLSYSGYILCPANIVLGPWI, MLIHVFRIVTSALMAVGFLLT, PFGTGTAIALTYIISSLLHGL, LATIYSACVLVGKCPSSCTV, VINMLFFALNIFNLIYLGCIF, and TELNYASHWLLVFAYLFYFVI. The active site involves His376.

Belongs to the membrane-bound acyltransferase family. Porcupine subfamily.

It is found in the endoplasmic reticulum membrane. It catalyses the reaction [Wnt protein]-L-serine + (9Z)-hexadecenoyl-CoA = [Wnt protein]-O-(9Z)-hexadecenoyl-L-serine + CoA. In terms of biological role, protein-serine O-palmitoleoyltransferase that acts as a key regulator of the Wnt signaling pathway by mediating the attachment of palmitoleate, a 16-carbon monounsaturated fatty acid (C16:1(9Z)), to Wnt proteins. Serine palmitoleoylation of WNT proteins is required for efficient binding to frizzled receptors. The chain is Protein-serine O-palmitoleoyltransferase porcupine from Anopheles gambiae (African malaria mosquito).